Here is a 127-residue protein sequence, read N- to C-terminus: Holo-[acyl-carrier-protein] synthase (127 aa).

Mg(2+) is bound by residues aspartate 8 and glutamate 57.

This sequence belongs to the P-Pant transferase superfamily. AcpS family. The cofactor is Mg(2+).

It is found in the cytoplasm. The enzyme catalyses apo-[ACP] + CoA = holo-[ACP] + adenosine 3',5'-bisphosphate + H(+). In terms of biological role, transfers the 4'-phosphopantetheine moiety from coenzyme A to a Ser of acyl-carrier-protein. In Hydrogenovibrio crunogenus (strain DSM 25203 / XCL-2) (Thiomicrospira crunogena), this protein is Holo-[acyl-carrier-protein] synthase.